Here is a 223-residue protein sequence, read N- to C-terminus: Putative nudix hydrolase 2 (223 aa).

The Nudix hydrolase domain occupies 72–213; that stretch reads ASADGVSIIA…SIVVESTLLA (142 aa). The Nudix box motif lies at 111-132; the sequence is GLIDAGETAQQAAIRELKEETG. Mg(2+) is bound by residues E126 and E130.

Belongs to the Nudix hydrolase family. It depends on Mg(2+) as a cofactor. Requires Mn(2+) as cofactor.

Probably mediates the hydrolysis of some nucleoside diphosphate derivatives. The polypeptide is Putative nudix hydrolase 2 (ndx-2) (Caenorhabditis elegans).